A 226-amino-acid polypeptide reads, in one-letter code: tRNA (guanine-N(1)-)-methyltransferase (226 aa).

S-adenosyl-L-methionine-binding positions include Gly-112 and 132-137; that span reads IGDYVL.

The protein belongs to the RNA methyltransferase TrmD family. As to quaternary structure, homodimer.

The protein resides in the cytoplasm. The enzyme catalyses guanosine(37) in tRNA + S-adenosyl-L-methionine = N(1)-methylguanosine(37) in tRNA + S-adenosyl-L-homocysteine + H(+). Functionally, specifically methylates guanosine-37 in various tRNAs. The sequence is that of tRNA (guanine-N(1)-)-methyltransferase from Flavobacterium johnsoniae (strain ATCC 17061 / DSM 2064 / JCM 8514 / BCRC 14874 / CCUG 350202 / NBRC 14942 / NCIMB 11054 / UW101) (Cytophaga johnsonae).